The primary structure comprises 545 residues: Membrane protein insertase YidC (545 aa).

4 consecutive transmembrane segments (helical) span residues 350–370 (IIGN…AVLY), 424–444 (LPML…FASV), 461–481 (ADPY…QTYL), and 498–518 (PLVF…YWVV).

This sequence belongs to the OXA1/ALB3/YidC family. Type 1 subfamily. In terms of assembly, interacts with the Sec translocase complex via SecD. Specifically interacts with transmembrane segments of nascent integral membrane proteins during membrane integration.

The protein resides in the cell inner membrane. Required for the insertion and/or proper folding and/or complex formation of integral membrane proteins into the membrane. Involved in integration of membrane proteins that insert both dependently and independently of the Sec translocase complex, as well as at least some lipoproteins. Aids folding of multispanning membrane proteins. In Neisseria gonorrhoeae (strain ATCC 700825 / FA 1090), this protein is Membrane protein insertase YidC.